The chain runs to 75 residues: Sec-independent protein translocase protein TatA (75 aa).

A helical transmembrane segment spans residues 1-21; that stretch reads MGISIWQLLIVLGIVILLFGT. Residues 41–75 form a disordered region; it reads SMSDEEEKNAEQQPLEKQNAEQQAQAEDKPKEKQG. Positions 56 to 65 are enriched in low complexity; the sequence is EKQNAEQQAQ. Basic and acidic residues predominate over residues 66 to 75; that stretch reads AEDKPKEKQG.

Belongs to the TatA/E family. As to quaternary structure, the Tat system comprises two distinct complexes: a TatABC complex, containing multiple copies of TatA, TatB and TatC subunits, and a separate TatA complex, containing only TatA subunits. Substrates initially bind to the TatABC complex, which probably triggers association of the separate TatA complex to form the active translocon.

The protein resides in the cell inner membrane. In terms of biological role, part of the twin-arginine translocation (Tat) system that transports large folded proteins containing a characteristic twin-arginine motif in their signal peptide across membranes. TatA could form the protein-conducting channel of the Tat system. In Marinobacter nauticus (strain ATCC 700491 / DSM 11845 / VT8) (Marinobacter aquaeolei), this protein is Sec-independent protein translocase protein TatA.